The chain runs to 369 residues: Glutamate 5-kinase (369 aa).

Position 11 (Lys11) interacts with ATP. Substrate-binding residues include Ser51, Asp138, and Asn150. ATP contacts are provided by residues 170–171 (TD) and 212–218 (TGGMATK). One can recognise a PUA domain in the interval 277–355 (KGSIVIDEGA…QDIYAVLGYE (79 aa)).

This sequence belongs to the glutamate 5-kinase family.

It is found in the cytoplasm. The catalysed reaction is L-glutamate + ATP = L-glutamyl 5-phosphate + ADP. It participates in amino-acid biosynthesis; L-proline biosynthesis; L-glutamate 5-semialdehyde from L-glutamate: step 1/2. Catalyzes the transfer of a phosphate group to glutamate to form L-glutamate 5-phosphate. The sequence is that of Glutamate 5-kinase from Aliivibrio fischeri (strain ATCC 700601 / ES114) (Vibrio fischeri).